A 238-amino-acid chain; its full sequence is Sugar fermentation stimulation protein homolog (238 aa).

It belongs to the SfsA family.

This chain is Sugar fermentation stimulation protein homolog, found in Histophilus somni (strain 2336) (Haemophilus somnus).